Here is a 747-residue protein sequence, read N- to C-terminus: Endoglucanase C (747 aa).

Positions 1–37 are cleaved as a signal peptide; sequence MGHVTSPSKRYPASFKRAGSILGVSIALAAFSNVAAA. In terms of domain architecture, CBM2 spans 38 to 136; sequence GCEYVVTNSW…TVNGAACTGG (99 aa). 3 cysteine pairs are disulfide-bonded: cysteine 39-cysteine 133, cysteine 183-cysteine 214, and cysteine 193-cysteine 208. The CBM10 domain maps to 182–211; it reads QCNWYGTLYPLCVSTTSGWGYENNRSCISP. Residues 226-283 are disordered; sequence GSSSPSSISSSSVRSSSSSSVVPPSSSSSSSVPSSSSSSVSSSSVVSSSSSSVSVPGT. The span at 227-281 shows a compositional bias: low complexity; the sequence is SSSPSSISSSSVRSSSSSSVVPPSSSSSSSVPSSSSSSVSSSSVVSSSSSSVSVP. Residues 280-747 form a catalytic region; the sequence is VPGTGVFRVN…TQLLHNMWGL (468 aa). The active-site Proton donor is glutamate 502. The active-site Nucleophile is the glutamate 652.

This sequence belongs to the glycosyl hydrolase 5 (cellulase A) family.

It carries out the reaction Endohydrolysis of (1-&gt;4)-beta-D-glucosidic linkages in cellulose, lichenin and cereal beta-D-glucans.. The protein is Endoglucanase C (celC) of Cellvibrio japonicus (strain Ueda107) (Pseudomonas fluorescens subsp. cellulosa).